The sequence spans 666 residues: Sodium/potassium/calcium exchanger 2 (666 aa).

Topologically, residues 1-38 are cytoplasmic; that stretch reads MDLHQSPTARLLQKWCSHESPFGCRRHYNSRKKLKLIR. Residues 39–59 form a helical membrane-spanning segment; sequence VIGLVMGLVAVSTVPFSISAF. Residues 60 to 133 lie on the Extracellular side of the membrane; it reads TETDSQSNRG…DIFSLEERRK (74 aa). The disordered stretch occupies residues 63–122; it reads DSQSNRGEASDMSGPRVAQGHRQRTLLDLNDKIRDYTPQPPASQEDQAENSTEHTQGDYP. N112 carries N-linked (GlcNAc...) asparagine glycosylation. The segment covering 113-122 has biased composition (basic and acidic residues); the sequence is STEHTQGDYP. The helical transmembrane segment at 134–154 threads the bilayer; the sequence is GAIILHVIGMIYMFIALAIVC. Over 155–179 the chain is Cytoplasmic; the sequence is DEFFVPSLTVITEKLGISDDVAGAT. The stretch at 175–215 is one Alpha-1 repeat; that stretch reads VAGATFMAAGGSAPELFTSLIGVFIAHSNVGIGTIVGSAVF. The helical transmembrane segment at 180–200 threads the bilayer; sequence FMAAGGSAPELFTSLIGVFIA. Residues 201–205 lie on the Extracellular side of the membrane; the sequence is HSNVG. The chain crosses the membrane as a helical span at residues 206-226; that stretch reads IGTIVGSAVFNILFVIGMCAL. At 227-237 the chain is on the cytoplasmic side; sequence FSREILNLTWW. Residues 238–258 traverse the membrane as a helical segment; sequence PLFRDVSFYIVDLLMLITFFL. Residues 259-260 lie on the Extracellular side of the membrane; it reads DN. Residues 261-281 traverse the membrane as a helical segment; it reads VIMWWESLLLLTAYFAYVVFM. Residues 282–502 are Cytoplasmic-facing; it reads KFNVQVERWV…PDVRKPASRK (221 aa). Residues 311–336 are disordered; sequence KSPTAGDKDGPTLPSKPRLQRGGSSA. A phosphoserine mark is found at S337 and S341. The segment at 397 to 467 is disordered; that stretch reads VDENERQNGA…EEDDQPLSLS (71 aa). The segment covering 416 to 442 has biased composition (polar residues); the sequence is PNSTSTEVEMTPSSEASEPVQNGNLSH. A helical membrane pass occupies residues 503-523; it reads FFPITFFGSITWIAVFSYLMV. At 524-538 the chain is on the extracellular side; that stretch reads WWAHQVGETIGISEE. A helical membrane pass occupies residues 539–559; that stretch reads IMGLTILAAGTSIPDLITSVI. An Alpha-2 repeat occupies 546–577; it reads AAGTSIPDLITSVIVARKGLGDMAVSSSVGSN. The Cytoplasmic segment spans residues 560–574; it reads VARKGLGDMAVSSSV. A helical membrane pass occupies residues 575–595; sequence GSNIFDITVGLPLPWLLYTII. The Extracellular portion of the chain corresponds to 596-607; that stretch reads HRFSPVTVSSNG. The chain crosses the membrane as a helical span at residues 608 to 628; it reads LFCAIVLLFIMLLFVILSIAL. The Cytoplasmic segment spans residues 629-635; it reads CKWRMNK. Residues 636-656 traverse the membrane as a helical segment; the sequence is ILGFIMFGLYFVFLVVSVLLE. Residues 657–666 are Extracellular-facing; the sequence is DKVLVCPVSI.

The protein belongs to the Ca(2+):cation antiporter (CaCA) (TC 2.A.19) family. SLC24A subfamily.

Its subcellular location is the cell membrane. It carries out the reaction Ca(2+)(out) + K(+)(out) + 4 Na(+)(in) = Ca(2+)(in) + K(+)(in) + 4 Na(+)(out). Its function is as follows. Calcium, potassium:sodium antiporter that transports 1 Ca(2+) and 1 K(+) in exchange for 4 Na(+). Required for learming and memory by regulating neuronal Ca(2+), which is essential for the development of synaptic plasticity. This is Sodium/potassium/calcium exchanger 2 from Mus musculus (Mouse).